A 269-amino-acid polypeptide reads, in one-letter code: Propanediol uptake facilitator PduF (269 aa).

Helical transmembrane passes span Ile10–Leu30 and Ile42–Gly62. An NPA 1 motif is present at residues Asn66–Ala68. A run of 3 helical transmembrane segments spans residues Ile69–Val89, Val143–Ala163, and Leu179–Ala199. Residues Asn201–Ala203 carry the NPA 2 motif. The helical transmembrane segment at Ile228–Ile248 threads the bilayer.

This sequence belongs to the MIP/aquaporin (TC 1.A.8) family.

The protein resides in the cell inner membrane. In terms of biological role, probably facilitates diffusion of 1,2-propanediol (1,2-PD) into the cell. This Citrobacter freundii protein is Propanediol uptake facilitator PduF.